The chain runs to 596 residues: Malto-oligosyltrehalose trehalohydrolase (596 aa).

263 to 268 (RLDAVH) is a substrate binding site. D265 functions as the Nucleophile in the catalytic mechanism. The active-site Proton donor is the E302. Substrate contacts are provided by residues 327 to 331 (DDFHH) and 397 to 402 (HDQIGN).

The protein belongs to the glycosyl hydrolase 13 family.

Its subcellular location is the cytoplasm. It catalyses the reaction hydrolysis of (1-&gt;4)-alpha-D-glucosidic linkage in 4-alpha-D-[(1-&gt;4)-alpha-D-glucanosyl]n trehalose to yield trehalose and (1-&gt;4)-alpha-D-glucan.. Its pathway is glycan biosynthesis; trehalose biosynthesis. The protein is Malto-oligosyltrehalose trehalohydrolase (treZ) of Rhizobium sp. (strain M-11).